A 359-amino-acid polypeptide reads, in one-letter code: Spore germination protein GerQC (359 aa).

The first 16 residues, 1-16 (MKRWILFLILSVFLIG), serve as a signal peptide directing secretion. Cysteine 17 carries N-palmitoyl cysteine lipidation. Cysteine 17 carries the S-diacylglycerol cysteine lipid modification.

Belongs to the GerABKC lipoprotein family.

It localises to the membrane. Required for the germination response to inosine. Has no role in L-alanine germination. This Bacillus cereus protein is Spore germination protein GerQC (gerQC).